Here is a 1061-residue protein sequence, read N- to C-terminus: Error-prone DNA polymerase (1061 aa).

The protein belongs to the DNA polymerase type-C family. DnaE2 subfamily.

Its subcellular location is the cytoplasm. The enzyme catalyses DNA(n) + a 2'-deoxyribonucleoside 5'-triphosphate = DNA(n+1) + diphosphate. Functionally, DNA polymerase involved in damage-induced mutagenesis and translesion synthesis (TLS). It is not the major replicative DNA polymerase. The sequence is that of Error-prone DNA polymerase from Bdellovibrio bacteriovorus (strain ATCC 15356 / DSM 50701 / NCIMB 9529 / HD100).